A 255-amino-acid chain; its full sequence is Flap endonuclease Xni (255 aa).

Residue D105 coordinates Mg(2+). A 5'-3' exonuclease domain is found at 162–253 (EHSQFIDYLA…NLSQFRLPNP (92 aa)). L172, A173, P181, V183, and I186 together coordinate K(+). The segment at 185 to 190 (GIGPKS) is interaction with DNA.

Belongs to the Xni family. It depends on Mg(2+) as a cofactor. Requires K(+) as cofactor.

In terms of biological role, has flap endonuclease activity. During DNA replication, flap endonucleases cleave the 5'-overhanging flap structure that is generated by displacement synthesis when DNA polymerase encounters the 5'-end of a downstream Okazaki fragment. This chain is Flap endonuclease Xni, found in Shewanella sediminis (strain HAW-EB3).